The sequence spans 396 residues: Growth-regulating factor 1 (396 aa).

The 36-residue stretch at 18–53 (PFTASQWQELEHQALIYKYMASGTPIPSDLILPLRR) folds into the QLQ domain. 2 short sequence motifs (bipartite nuclear localization signal) span residues 86 to 105 (RKAE…KKWR) and 123 to 130 (RGKNRSRK). The WRC domain occupies 90–134 (DPEPGRCRRTDGKKWRCSKEAYPDSKYCEKHMHRGKNRSRKPVEM). The segment at 117 to 176 (CEKHMHRGKNRSRKPVEMSLATPPPPSSSATSAASNSSAGVAPTTTTTSSPAPSYSRPAP) is disordered. Positions 120–129 (HMHRGKNRSR) are enriched in basic residues. Residues 144–174 (SSATSAASNSSAGVAPTTTTTSSPAPSYSRP) show a composition bias toward low complexity.

Belongs to the GRF family. In terms of tissue distribution, highly expressed in the intercalary meristem of the internode and in the shoot apex. Detected in the leaf primordia and emerging leaves in the uppermost node. Preferentially localized in the epidermis and in the tissues surrounding vascular bundles of the intercalary meristem of the internode and in adventitious roots of the second highest node. Low expression in the coleoptile and in the youngest leaf.

It is found in the nucleus. Its function is as follows. Transcription activator that plays a regulatory role in gibberellin-induced stem elongation. This chain is Growth-regulating factor 1 (GRF1), found in Oryza sativa subsp. indica (Rice).